Here is a 104-residue protein sequence, read N- to C-terminus: Large ribosomal subunit protein bL21 (104 aa).

It belongs to the bacterial ribosomal protein bL21 family. As to quaternary structure, part of the 50S ribosomal subunit. Contacts protein L20.

Its function is as follows. This protein binds to 23S rRNA in the presence of protein L20. The polypeptide is Large ribosomal subunit protein bL21 (Leptospira interrogans serogroup Icterohaemorrhagiae serovar copenhageni (strain Fiocruz L1-130)).